Reading from the N-terminus, the 291-residue chain is tRNA dimethylallyltransferase (291 aa).

9 to 16 (GPTASGKT) is a binding site for ATP. 11-16 (TASGKT) is a substrate binding site. An interaction with substrate tRNA region spans residues 34–37 (DSLQ).

The protein belongs to the IPP transferase family. In terms of assembly, monomer. The cofactor is Mg(2+).

The enzyme catalyses adenosine(37) in tRNA + dimethylallyl diphosphate = N(6)-dimethylallyladenosine(37) in tRNA + diphosphate. In terms of biological role, catalyzes the transfer of a dimethylallyl group onto the adenine at position 37 in tRNAs that read codons beginning with uridine, leading to the formation of N6-(dimethylallyl)adenosine (i(6)A). In Aster yellows witches'-broom phytoplasma (strain AYWB), this protein is tRNA dimethylallyltransferase.